The following is a 27-amino-acid chain: Trichocyst matrix protein T4-C (27 aa).

Belongs to the TMP family.

It is found in the trichocyst. Structural protein that crystallize inside the trichocyst matrix. In Paramecium tetraurelia, this protein is Trichocyst matrix protein T4-C (T4C).